Here is a 674-residue protein sequence, read N- to C-terminus: Pentatricopeptide repeat-containing protein At4g17616 (674 aa).

PPR repeat units follow at residues 409–443, 444–478, 519–553, 554–584, and 593–627; these read GSRL…GYPM, ELAT…GLIT, MLYE…KIPP, TVQS…IKRN, and TQDL…DMYN.

Belongs to the PPR family. P subfamily.

In Arabidopsis thaliana (Mouse-ear cress), this protein is Pentatricopeptide repeat-containing protein At4g17616.